A 233-amino-acid polypeptide reads, in one-letter code: Purine nucleoside phosphorylase DeoD-type (233 aa).

Residue H4 coordinates a purine D-ribonucleoside. Residues G20, R24, R43, and 87-90 contribute to the phosphate site; that span reads RVGS. A purine D-ribonucleoside contacts are provided by residues 178–180 and 202–203; these read EME and SD. Residue D203 is the Proton donor of the active site.

The protein belongs to the PNP/UDP phosphorylase family. Homohexamer; trimer of homodimers.

The catalysed reaction is a purine D-ribonucleoside + phosphate = a purine nucleobase + alpha-D-ribose 1-phosphate. It catalyses the reaction a purine 2'-deoxy-D-ribonucleoside + phosphate = a purine nucleobase + 2-deoxy-alpha-D-ribose 1-phosphate. Catalyzes the reversible phosphorolytic breakdown of the N-glycosidic bond in the beta-(deoxy)ribonucleoside molecules, with the formation of the corresponding free purine bases and pentose-1-phosphate. The protein is Purine nucleoside phosphorylase DeoD-type of Bacillus subtilis (strain 168).